The following is a 476-amino-acid chain: 3-isopropylmalate dehydratase large subunit (476 aa).

Residues C353, C413, and C416 each contribute to the [4Fe-4S] cluster site.

Belongs to the aconitase/IPM isomerase family. LeuC type 1 subfamily. Heterodimer of LeuC and LeuD. Requires [4Fe-4S] cluster as cofactor.

The catalysed reaction is (2R,3S)-3-isopropylmalate = (2S)-2-isopropylmalate. It participates in amino-acid biosynthesis; L-leucine biosynthesis; L-leucine from 3-methyl-2-oxobutanoate: step 2/4. Catalyzes the isomerization between 2-isopropylmalate and 3-isopropylmalate, via the formation of 2-isopropylmaleate. This is 3-isopropylmalate dehydratase large subunit from Yersinia enterocolitica serotype O:8 / biotype 1B (strain NCTC 13174 / 8081).